The chain runs to 273 residues: Type IV secretion system protein PtlF homolog (273 aa).

Positions 1–20 (MMAARMMAAGLAATALSAHA) are cleaved as a signal peptide.

Belongs to the TrbG/VirB9 family.

It is found in the cell outer membrane. The protein is Type IV secretion system protein PtlF homolog (ptlF) of Bordetella bronchiseptica (strain ATCC BAA-588 / NCTC 13252 / RB50) (Alcaligenes bronchisepticus).